Consider the following 824-residue polypeptide: U-box domain-containing protein 24 (824 aa).

Residues 13–92 (GAFEAFVCPL…HEWRARNEEK (80 aa)) enclose the U-box domain. ARM repeat units follow at residues 133–172 (AASKDLVRRRGVLRAVAEMLKSGSRRLRLKSLQVLRVLVE), 175–214 (DDNKEELGKGDTIRTIIKFLSNEHVQERELAVSLLHELSG), 217–258 (PTCE…NLDR), 260–299 (DANVKQMADNGRLQPLLTRLLRGEPDTRVAMADYLGELAL), 300–339 (ANDDKAAVAEQAGPLLVGMLRTGATPAKEATLKALREISS), 341–385 (EASA…NLVA), 396–435 (DDDEDDDGGGGGRGRRRTLLSEDVVHSQLHLISNTGPAIG), 441–481 (VLAG…DIRV), and 486–525 (LLRNLAPYMGAELADALGGSLSSLLRAISSDGGGVTEEQA).

Interacts with BZR1, BZR2, BZR3 and GSK2. Auto-ubiquitinated. In terms of processing, phosphorylated by GSK2. Phosphorylation of PUB24 increases its cellular stability.

It localises to the cytoplasm. Its subcellular location is the cytosol. It is found in the nucleus. The enzyme catalyses S-ubiquitinyl-[E2 ubiquitin-conjugating enzyme]-L-cysteine + [acceptor protein]-L-lysine = [E2 ubiquitin-conjugating enzyme]-L-cysteine + N(6)-ubiquitinyl-[acceptor protein]-L-lysine.. The protein operates within protein modification; protein ubiquitination. In terms of biological role, E3 ubiquitin-protein ligase that functions as a negative regulator of brassinosteroid (BR) signaling. Targets BZR1, a positive regulator of BR signaling pathway, and promotes its degradation via the ubiquitin-26S proteasome pathway. This chain is U-box domain-containing protein 24, found in Oryza sativa subsp. japonica (Rice).